Here is a 119-residue protein sequence, read N- to C-terminus: Fluoride-specific ion channel FluC 1 (119 aa).

The next 4 helical transmembrane spans lie at 2-22 (TGAV…GAVL), 37-57 (AGTL…TFAA), 62-82 (TMLL…SFSV), and 99-119 (HALG…LLVA). Na(+) is bound by residues Gly72 and Thr75.

It belongs to the fluoride channel Fluc/FEX (TC 1.A.43) family.

Its subcellular location is the cell membrane. The catalysed reaction is fluoride(in) = fluoride(out). With respect to regulation, na(+) is not transported, but it plays an essential structural role and its presence is essential for fluoride channel function. In terms of biological role, fluoride-specific ion channel. Important for reducing fluoride concentration in the cell, thus reducing its toxicity. In Halobacterium salinarum (strain ATCC 700922 / JCM 11081 / NRC-1) (Halobacterium halobium), this protein is Fluoride-specific ion channel FluC 1.